Reading from the N-terminus, the 62-residue chain is Conotoxin Qc5.1 (62 aa).

The first 22 residues, 1 to 22 (MRCVPVFIILLLLSPSAPSVDA), serve as a signal peptide directing secretion. Positions 23-48 (HPMTKDDVPQASFHDDAKRTLQVPWM) are excised as a propeptide. Val60 is modified (valine amide).

This sequence belongs to the conotoxin T superfamily. Post-translationally, contains 2 disulfide bonds that can be either 'C1-C3, C2-C4' or 'C1-C4, C2-C3', since these disulfide connectivities have been observed for conotoxins with cysteine framework V (for examples, see AC P0DQQ7 and AC P81755). In terms of tissue distribution, expressed by the venom duct.

It localises to the secreted. The sequence is that of Conotoxin Qc5.1 from Conus quercinus (Oak cone).